Consider the following 637-residue polypeptide: Threonine--tRNA ligase (637 aa).

The 61-residue stretch at 1 to 61 folds into the TGS domain; the sequence is MITITLPDSS…ATDAAVRLIT (61 aa). A catalytic region spans residues 238–528; that stretch reads DHRKLGAELD…LIEHFAGKFP (291 aa). Zn(2+) contacts are provided by C329, H380, and H505.

This sequence belongs to the class-II aminoacyl-tRNA synthetase family. In terms of assembly, homodimer. Zn(2+) is required as a cofactor.

The protein localises to the cytoplasm. The catalysed reaction is tRNA(Thr) + L-threonine + ATP = L-threonyl-tRNA(Thr) + AMP + diphosphate + H(+). Its function is as follows. Catalyzes the attachment of threonine to tRNA(Thr) in a two-step reaction: L-threonine is first activated by ATP to form Thr-AMP and then transferred to the acceptor end of tRNA(Thr). Also edits incorrectly charged L-seryl-tRNA(Thr). In Desulfosudis oleivorans (strain DSM 6200 / JCM 39069 / Hxd3) (Desulfococcus oleovorans), this protein is Threonine--tRNA ligase.